Consider the following 312-residue polypeptide: Acyl-CoA C20 Delta5-desaturase (312 aa).

Transmembrane regions (helical) follow at residues 45-65 and 69-89; these read VFHI…PSTF and SFWV…TLSF. Positions 90, 95, 127, 130, and 131 each coordinate Fe cation. Positions 90-95 match the Histidine box-1 motif; it reads HRNLTH. A Histidine box-2 motif is present at residues 127–131; the sequence is HRYHH. A helical membrane pass occupies residues 193–213; sequence LQAALLYLFGGFPFIVWGMAV. Residues His-230, His-259, His-262, and His-263 each contribute to the Fe cation site. A Histidine box-3 motif is present at residues 259–263; it reads HNNHH.

This sequence belongs to the fatty acid desaturase type 1 family. The cofactor is Fe(2+).

It localises to the membrane. It catalyses the reaction (11Z,14Z)-eicosadienoyl-CoA + AH2 + O2 = (5Z,11Z,14Z)-eicosatrienoyl-CoA + A + 2 H2O. The enzyme catalyses (11Z,14Z,17Z)-eicosatrienoyl-CoA + AH2 + O2 = (5Z,11Z,14Z,17Z)-eicosatetraenoyl-CoA + A + 2 H2O. It functions in the pathway lipid metabolism; polyunsaturated fatty acid biosynthesis. Functionally, catalyzes the desaturation of 20:2Delta(11,14) and 20:3Delta(11,14,17) to generate sciadonic acid (20:3Delta(5,11,14)) and juniperonic acid (20:4Delta(5,11,14,17)). The polypeptide is Acyl-CoA C20 Delta5-desaturase (Anemone leveillei (Windflower)).